A 68-amino-acid chain; its full sequence is Small, acid-soluble spore protein I (68 aa).

It belongs to the SspI family.

It localises to the spore core. In Halalkalibacterium halodurans (strain ATCC BAA-125 / DSM 18197 / FERM 7344 / JCM 9153 / C-125) (Bacillus halodurans), this protein is Small, acid-soluble spore protein I.